We begin with the raw amino-acid sequence, 188 residues long: Ribosome maturation factor RimM (188 aa).

One can recognise a PRC barrel domain in the interval 93–175 (QDEFYFTDLI…EIEVQGDLSD (83 aa)).

It belongs to the RimM family. As to quaternary structure, binds ribosomal protein uS19.

Its subcellular location is the cytoplasm. In terms of biological role, an accessory protein needed during the final step in the assembly of 30S ribosomal subunit, possibly for assembly of the head region. Essential for efficient processing of 16S rRNA. May be needed both before and after RbfA during the maturation of 16S rRNA. It has affinity for free ribosomal 30S subunits but not for 70S ribosomes. This chain is Ribosome maturation factor RimM, found in Gluconacetobacter diazotrophicus (strain ATCC 49037 / DSM 5601 / CCUG 37298 / CIP 103539 / LMG 7603 / PAl5).